Here is a 363-residue protein sequence, read N- to C-terminus: tRNA N6-adenosine threonylcarbamoyltransferase (363 aa).

The Fe cation site is built by H127 and H131. Substrate is bound by residues 150–154 (LISGG), D183, G196, and N290. D318 lines the Fe cation pocket.

Belongs to the KAE1 / TsaD family. The cofactor is Fe(2+).

Its subcellular location is the cytoplasm. It catalyses the reaction L-threonylcarbamoyladenylate + adenosine(37) in tRNA = N(6)-L-threonylcarbamoyladenosine(37) in tRNA + AMP + H(+). Functionally, required for the formation of a threonylcarbamoyl group on adenosine at position 37 (t(6)A37) in tRNAs that read codons beginning with adenine. Is involved in the transfer of the threonylcarbamoyl moiety of threonylcarbamoyl-AMP (TC-AMP) to the N6 group of A37, together with TsaE and TsaB. TsaD likely plays a direct catalytic role in this reaction. This chain is tRNA N6-adenosine threonylcarbamoyltransferase, found in Zymomonas mobilis subsp. mobilis (strain ATCC 31821 / ZM4 / CP4).